A 263-amino-acid polypeptide reads, in one-letter code: MKPTTIALLQKYKQEKKRFATITAYDYSFAKLFADEGLSVMLVGDSLGMTIQGHDSTLPVTVEDIAYHTRAVRRGAPNCLLLSDLPFMAYATPEQAFANAATMMRAGANMVKIEGGAWLVDTVKMLTERAVPVCAHLGLTPQSVNIFGGYKVQGRGDAGDQLLSDALALEGAGAQLLVLECVPVELAKRVTEALSIPVIGIGAGNVTDGQILVMHDAFGITGGHIPKFAKNFLSTAGDIRAAVRQYISEVASGVYPGEEHSFH.

Asp-45 and Asp-84 together coordinate Mg(2+). Residues 45–46 (DS), Asp-84, and Lys-112 contribute to the 3-methyl-2-oxobutanoate site. Glu-114 serves as a coordination point for Mg(2+). Glu-180 serves as the catalytic Proton acceptor.

This sequence belongs to the PanB family. As to quaternary structure, homodecamer; pentamer of dimers. Mg(2+) serves as cofactor.

It localises to the cytoplasm. It carries out the reaction 3-methyl-2-oxobutanoate + (6R)-5,10-methylene-5,6,7,8-tetrahydrofolate + H2O = 2-dehydropantoate + (6S)-5,6,7,8-tetrahydrofolate. The protein operates within cofactor biosynthesis; (R)-pantothenate biosynthesis; (R)-pantoate from 3-methyl-2-oxobutanoate: step 1/2. Its function is as follows. Catalyzes the reversible reaction in which hydroxymethyl group from 5,10-methylenetetrahydrofolate is transferred onto alpha-ketoisovalerate to form ketopantoate. This is 3-methyl-2-oxobutanoate hydroxymethyltransferase from Salmonella arizonae (strain ATCC BAA-731 / CDC346-86 / RSK2980).